Reading from the N-terminus, the 320-residue chain is tRNA dimethylallyltransferase (320 aa).

17 to 24 is an ATP binding site; the sequence is GPTAVGKT. 19-24 contacts substrate; the sequence is TAVGKT. Positions 42-45 are interaction with substrate tRNA; the sequence is DSMQ.

The protein belongs to the IPP transferase family. As to quaternary structure, monomer. Mg(2+) is required as a cofactor.

It catalyses the reaction adenosine(37) in tRNA + dimethylallyl diphosphate = N(6)-dimethylallyladenosine(37) in tRNA + diphosphate. Functionally, catalyzes the transfer of a dimethylallyl group onto the adenine at position 37 in tRNAs that read codons beginning with uridine, leading to the formation of N6-(dimethylallyl)adenosine (i(6)A). The polypeptide is tRNA dimethylallyltransferase (Bacillus thuringiensis (strain Al Hakam)).